The chain runs to 152 residues: 3-hydroxyacyl-[acyl-carrier-protein] dehydratase FabZ (152 aa).

The active site involves His-57.

The protein belongs to the thioester dehydratase family. FabZ subfamily.

The protein localises to the cytoplasm. It catalyses the reaction a (3R)-hydroxyacyl-[ACP] = a (2E)-enoyl-[ACP] + H2O. In terms of biological role, involved in unsaturated fatty acids biosynthesis. Catalyzes the dehydration of short chain beta-hydroxyacyl-ACPs and long chain saturated and unsaturated beta-hydroxyacyl-ACPs. This is 3-hydroxyacyl-[acyl-carrier-protein] dehydratase FabZ from Bradyrhizobium sp. (strain BTAi1 / ATCC BAA-1182).